Here is a 1085-residue protein sequence, read N- to C-terminus: RecBCD enzyme subunit RecC (1085 aa).

The protein belongs to the RecC family. In terms of assembly, heterotrimer of RecB, RecC and RecD. All subunits contribute to DNA-binding.

A helicase/nuclease that prepares dsDNA breaks (DSB) for recombinational DNA repair. Binds to DSBs and unwinds DNA via a highly rapid and processive ATP-dependent bidirectional helicase activity. Holoenzyme degrades any linearized DNA that is unable to undergo homologous recombination. In the holoenzyme this subunit recognizes the wild-type Chi sequence, and when added to isolated RecB increases its ATP-dependent helicase processivity. Unlike the case in E.coli, suppresses RecA-dependent homologous recombination, is instead required for single-strand annealing pathway repair of DSB. This is RecBCD enzyme subunit RecC from Mycolicibacterium smegmatis (strain ATCC 700084 / mc(2)155) (Mycobacterium smegmatis).